The chain runs to 206 residues: Small ribosomal subunit protein uS4 (206 aa).

Residues 96–156 enclose the S4 RNA-binding domain; sequence TRLDNVVYRM…EKSQKQARIK (61 aa).

Belongs to the universal ribosomal protein uS4 family. In terms of assembly, part of the 30S ribosomal subunit. Contacts protein S5. The interaction surface between S4 and S5 is involved in control of translational fidelity.

One of the primary rRNA binding proteins, it binds directly to 16S rRNA where it nucleates assembly of the body of the 30S subunit. In terms of biological role, with S5 and S12 plays an important role in translational accuracy. The chain is Small ribosomal subunit protein uS4 from Shewanella loihica (strain ATCC BAA-1088 / PV-4).